The primary structure comprises 333 residues: Transcription factor TGA2.2 (333 aa).

Residues 1 to 14 (MADASSRTDTSTVL) show a composition bias toward polar residues. Residues 1–48 (MADASSRTDTSTVLDTDDKNQMVDGQSGAIVPSNSSDRSDRSDKPMDQ) form a disordered region. Residues 37–48 (DRSDRSDKPMDQ) show a composition bias toward basic and acidic residues. The 45-residue stretch at 47–91 (DQKVLRRLAQNREAARKSRLRKKAYVQQLESSKLKLASLEQEINK) folds into the bZIP domain. A basic motif region spans residues 49–69 (KVLRRLAQNREAARKSRLRKK). The tract at residues 75–89 (LESSKLKLASLEQEI) is leucine-zipper. The DOG1 domain occupies 114 to 330 (AMTFDLEYAR…RALSSLWLAR (217 aa)).

It belongs to the bZIP family. As to quaternary structure, interacts with NPR1/NH1. Interacts with NPR3/NH3.

It is found in the nucleus. Functionally, transcriptional regulator involved in defense response. The chain is Transcription factor TGA2.2 from Oryza sativa subsp. japonica (Rice).